The sequence spans 386 residues: G2/mitotic-specific cyclin-B2 (386 aa).

A disordered region spans residues 45-64; it reads TNGKVGPSKKPSKASCAQKP.

The protein belongs to the cyclin family. Cyclin AB subfamily. As to quaternary structure, interacts with the CDK1 protein kinase to form a serine/threonine kinase holoenzyme complex also known as maturation promoting factor (MPF). The cyclin subunit imparts substrate specificity to the complex.

Its function is as follows. Essential for the control of the cell cycle at the G2/M (mitosis) transition. The protein is G2/mitotic-specific cyclin-B2 (ccnb2) of Oryzias luzonensis (Luzon ricefish).